The sequence spans 282 residues: PILR alpha-associated neural protein (282 aa).

A signal peptide spans M1–G31. The segment at P28–S99 is disordered. Over S32 to P178 the chain is Extracellular. Residues P46–R56 show a composition bias toward low complexity. An O-linked (GalNAc...) threonine glycan is attached at T140. A helical transmembrane segment spans residues Q179–F199. Residues K200–L282 are Cytoplasmic-facing. The disordered stretch occupies residues R209 to L282. The span at S213–T229 shows a compositional bias: polar residues.

O-glycosylation at Thr-140 is essential for recognition by PILRA. In terms of tissue distribution, mainly expressed in adult brain and cerebellum. Weaker expression in fetal brain and virtually no expression in spleen, heart, kidney, liver and dorsal ganglion relative to brain.

Its subcellular location is the membrane. Its function is as follows. Acts as a ligand for PILRA in neural tissues, where it may be involved in immune regulation. The polypeptide is PILR alpha-associated neural protein (PIANP) (Homo sapiens (Human)).